Consider the following 314-residue polypeptide: 1-aminocyclopropane-1-carboxylate oxidase 1 (314 aa).

Residues 153-253 (PNFGTKVSNY…RMSIASFYNP (101 aa)) form the Fe2OG dioxygenase domain. 3 residues coordinate Fe cation: histidine 177, aspartate 179, and histidine 234.

Belongs to the iron/ascorbate-dependent oxidoreductase family. Monomer. Requires Fe cation as cofactor.

The catalysed reaction is 1-aminocyclopropane-1-carboxylate + L-ascorbate + O2 = ethene + L-dehydroascorbate + hydrogen cyanide + CO2 + 2 H2O. Its pathway is alkene biosynthesis; ethylene biosynthesis via S-adenosyl-L-methionine; ethylene from S-adenosyl-L-methionine: step 2/2. This chain is 1-aminocyclopropane-1-carboxylate oxidase 1, found in Malus domestica (Apple).